Reading from the N-terminus, the 339-residue chain is Glycerol-3-phosphate dehydrogenase [NAD(P)+] (339 aa).

4 residues coordinate NADPH: Ser-15, Tyr-16, His-36, and Lys-110. Positions 110, 139, and 141 each coordinate sn-glycerol 3-phosphate. Ala-143 lines the NADPH pocket. Lys-195, Asp-248, Ser-258, Arg-259, and Asn-260 together coordinate sn-glycerol 3-phosphate. Lys-195 (proton acceptor) is an active-site residue. Residue Arg-259 coordinates NADPH. 2 residues coordinate NADPH: Val-283 and Glu-285.

Belongs to the NAD-dependent glycerol-3-phosphate dehydrogenase family.

The protein localises to the cytoplasm. It carries out the reaction sn-glycerol 3-phosphate + NAD(+) = dihydroxyacetone phosphate + NADH + H(+). It catalyses the reaction sn-glycerol 3-phosphate + NADP(+) = dihydroxyacetone phosphate + NADPH + H(+). It functions in the pathway membrane lipid metabolism; glycerophospholipid metabolism. Functionally, catalyzes the reduction of the glycolytic intermediate dihydroxyacetone phosphate (DHAP) to sn-glycerol 3-phosphate (G3P), the key precursor for phospholipid synthesis. The protein is Glycerol-3-phosphate dehydrogenase [NAD(P)+] of Shigella boydii serotype 18 (strain CDC 3083-94 / BS512).